We begin with the raw amino-acid sequence, 111 residues long: uncharacterized protein (111 aa).

It belongs to the asfivirus E111R family.

This is an uncharacterized protein from Ornithodoros (relapsing fever ticks).